A 137-amino-acid chain; its full sequence is Venom allergen 4 (137 aa).

The N-terminal stretch at 1–19 (MKTFVLVSCLLVFTQIIYA) is a signal peptide.

The protein belongs to the ant venom allergen 2/4 family. As to quaternary structure, monomer. Expressed by the venom gland.

Its subcellular location is the secreted. This is Venom allergen 4 from Solenopsis geminata (Tropical fire ant).